The primary structure comprises 429 residues: Enolase (429 aa).

Residue Gln-167 coordinates (2R)-2-phosphoglycerate. Glu-209 serves as the catalytic Proton donor. 3 residues coordinate Mg(2+): Asp-246, Glu-289, and Asp-316. (2R)-2-phosphoglycerate contacts are provided by Lys-341, Arg-370, Ser-371, and Lys-392. Lys-341 acts as the Proton acceptor in catalysis.

It belongs to the enolase family. In terms of assembly, component of the RNA degradosome, a multiprotein complex involved in RNA processing and mRNA degradation. It depends on Mg(2+) as a cofactor.

Its subcellular location is the cytoplasm. It localises to the secreted. The protein resides in the cell surface. The catalysed reaction is (2R)-2-phosphoglycerate = phosphoenolpyruvate + H2O. Its pathway is carbohydrate degradation; glycolysis; pyruvate from D-glyceraldehyde 3-phosphate: step 4/5. Catalyzes the reversible conversion of 2-phosphoglycerate (2-PG) into phosphoenolpyruvate (PEP). It is essential for the degradation of carbohydrates via glycolysis. This chain is Enolase, found in Cellvibrio japonicus (strain Ueda107) (Pseudomonas fluorescens subsp. cellulosa).